A 155-amino-acid polypeptide reads, in one-letter code: 3-hydroxyacyl-[acyl-carrier-protein] dehydratase FabZ (155 aa).

His54 is a catalytic residue.

The protein belongs to the thioester dehydratase family. FabZ subfamily.

It localises to the cytoplasm. The catalysed reaction is a (3R)-hydroxyacyl-[ACP] = a (2E)-enoyl-[ACP] + H2O. In terms of biological role, involved in unsaturated fatty acids biosynthesis. Catalyzes the dehydration of short chain beta-hydroxyacyl-ACPs and long chain saturated and unsaturated beta-hydroxyacyl-ACPs. This Burkholderia lata (strain ATCC 17760 / DSM 23089 / LMG 22485 / NCIMB 9086 / R18194 / 383) protein is 3-hydroxyacyl-[acyl-carrier-protein] dehydratase FabZ.